The following is a 138-amino-acid chain: Ferredoxin-2 (138 aa).

Residues Ala27–His117 enclose the 2Fe-2S ferredoxin-type domain. The [2Fe-2S] cluster site is built by Cys62, Cys67, Cys70, and Cys100.

It belongs to the 2Fe2S plant-type ferredoxin family. The cofactor is [2Fe-2S] cluster.

In terms of biological role, ferredoxins are iron-sulfur proteins that transfer electrons in a wide variety of metabolic reactions. This Haloarcula marismortui (strain ATCC 43049 / DSM 3752 / JCM 8966 / VKM B-1809) (Halobacterium marismortui) protein is Ferredoxin-2 (fer2).